The following is a 49-amino-acid chain: Large ribosomal subunit protein bL33A (49 aa).

The protein belongs to the bacterial ribosomal protein bL33 family.

This chain is Large ribosomal subunit protein bL33A, found in Lactobacillus delbrueckii subsp. bulgaricus (strain ATCC 11842 / DSM 20081 / BCRC 10696 / JCM 1002 / NBRC 13953 / NCIMB 11778 / NCTC 12712 / WDCM 00102 / Lb 14).